Here is a 422-residue protein sequence, read N- to C-terminus: Histidine--tRNA ligase (422 aa).

Belongs to the class-II aminoacyl-tRNA synthetase family. Homodimer.

The protein resides in the cytoplasm. The catalysed reaction is tRNA(His) + L-histidine + ATP = L-histidyl-tRNA(His) + AMP + diphosphate + H(+). The sequence is that of Histidine--tRNA ligase from Lysinibacillus sphaericus (strain C3-41).